A 179-amino-acid polypeptide reads, in one-letter code: Large ribosomal subunit protein uL5 (179 aa).

It belongs to the universal ribosomal protein uL5 family. Part of the 50S ribosomal subunit; part of the 5S rRNA/L5/L18/L25 subcomplex. Contacts the 5S rRNA and the P site tRNA. Forms a bridge to the 30S subunit in the 70S ribosome.

In terms of biological role, this is one of the proteins that bind and probably mediate the attachment of the 5S RNA into the large ribosomal subunit, where it forms part of the central protuberance. In the 70S ribosome it contacts protein S13 of the 30S subunit (bridge B1b), connecting the 2 subunits; this bridge is implicated in subunit movement. Contacts the P site tRNA; the 5S rRNA and some of its associated proteins might help stabilize positioning of ribosome-bound tRNAs. The chain is Large ribosomal subunit protein uL5 from Francisella philomiragia subsp. philomiragia (strain ATCC 25017 / CCUG 19701 / FSC 153 / O#319-036).